The chain runs to 229 residues: Prolactin (229 aa).

Residues 1 to 30 (MDKKRSSLKGSLLLLLLLVSDLLLCKSVAS) form the signal peptide. A disulfide bond links Cys34 and Cys41. Position 56 is a phosphoserine (Ser56). The N-linked (GlcNAc...) asparagine; partial glycan is linked to Asn61. Phosphoserine occurs at positions 64 and 120. Disulfide bonds link Cys88–Cys204 and Cys221–Cys229.

Belongs to the somatotropin/prolactin family. Interacts with PRLR.

It localises to the secreted. Prolactin acts primarily on the mammary gland by promoting lactation. The polypeptide is Prolactin (PRL) (Equus caballus (Horse)).